The following is a 165-amino-acid chain: Nucleotide-binding protein CFF8240_1664 (165 aa).

Belongs to the YajQ family.

Nucleotide-binding protein. The chain is Nucleotide-binding protein CFF8240_1664 from Campylobacter fetus subsp. fetus (strain 82-40).